A 750-amino-acid polypeptide reads, in one-letter code: Photosystem I P700 chlorophyll a apoprotein A1 (750 aa).

8 helical membrane passes run 70–93, 156–179, 195–219, 291–309, 346–369, 385–411, 433–455, and 531–549; these read VFSA…FHGA, LYCT…FHYH, LNHH…HVSL, IAHH…GHMY, WHAQ…HHMY, LSLF…IFMV, AIIS…LYIH, and FLVH…LILL. [4Fe-4S] cluster-binding residues include cysteine 573 and cysteine 582. Transmembrane regions (helical) follow at residues 589-610 and 664-686; these read HVFL…HFSW and LSAY…MFLF. Position 675 (histidine 675) interacts with chlorophyll a'. Methionine 683 and tyrosine 691 together coordinate chlorophyll a. Phylloquinone is bound at residue tryptophan 692. A helical membrane pass occupies residues 724-744; the sequence is AVGVTHYLLGGIATTWAFFLA.

This sequence belongs to the PsaA/PsaB family. In terms of assembly, the PsaA/B heterodimer binds the P700 chlorophyll special pair and subsequent electron acceptors. PSI consists of a core antenna complex that captures photons, and an electron transfer chain that converts photonic excitation into a charge separation. The eukaryotic PSI reaction center is composed of at least 11 subunits. It depends on P700 is a chlorophyll a/chlorophyll a' dimer, A0 is one or more chlorophyll a, A1 is one or both phylloquinones and FX is a shared 4Fe-4S iron-sulfur center. as a cofactor.

Its subcellular location is the plastid. The protein resides in the chloroplast thylakoid membrane. The enzyme catalyses reduced [plastocyanin] + hnu + oxidized [2Fe-2S]-[ferredoxin] = oxidized [plastocyanin] + reduced [2Fe-2S]-[ferredoxin]. PsaA and PsaB bind P700, the primary electron donor of photosystem I (PSI), as well as the electron acceptors A0, A1 and FX. PSI is a plastocyanin-ferredoxin oxidoreductase, converting photonic excitation into a charge separation, which transfers an electron from the donor P700 chlorophyll pair to the spectroscopically characterized acceptors A0, A1, FX, FA and FB in turn. Oxidized P700 is reduced on the lumenal side of the thylakoid membrane by plastocyanin. This chain is Photosystem I P700 chlorophyll a apoprotein A1, found in Populus trichocarpa (Western balsam poplar).